Here is a 64-residue protein sequence, read N- to C-terminus: Large ribosomal subunit protein uL29 (64 aa).

This sequence belongs to the universal ribosomal protein uL29 family.

In Thiobacillus denitrificans (strain ATCC 25259 / T1), this protein is Large ribosomal subunit protein uL29.